A 388-amino-acid chain; its full sequence is Splicing factor 3B subunit 4 (388 aa).

2 RRM domains span residues 13–91 (ATIY…KASA) and 100–179 (ANIF…YAFK). Residues 244–388 (QPPPLMGMAQ…GMIPPPPPPS (145 aa)) are disordered. Pro residues-rich tracts occupy residues 261–325 (PPVP…PSRF), 333–355 (MPPPPPPGMRYPGGMPPPPPPRY), and 362–388 (MYPPPPPSRPPAPPSGHGMIPPPPPPS).

The protein belongs to the SF3B4 family.

The protein resides in the nucleus. Its function is as follows. Subunit of the splicing factor SF3B required for 'A' complex assembly formed by the stable binding of U2 snRNP to the branchpoint sequence (BPS) in pre-mRNA. Sequence independent binding of SF3A/SF3B complex upstream of the branch site is essential, it may anchor U2 snRNP to the pre-mRNA. May also be involved in the assembly of the 'E' complex. SF3B4 has been found in complex 'B' and 'C' as well. Belongs also to the minor U12-dependent spliceosome, which is involved in the splicing of rare class of nuclear pre-mRNA intron. This is Splicing factor 3B subunit 4 (sap-49) from Caenorhabditis elegans.